Reading from the N-terminus, the 215-residue chain is Kunitz trypsin inhibitor 4 (215 aa).

The signal sequence occupies residues 1 to 28 (MTKTTKTMNPKFYLVLALTAVLASNAYG). Intrachain disulfides connect cysteine 66–cysteine 112 and cysteine 165–cysteine 176. Asparagine 206 carries an N-linked (GlcNAc...) asparagine glycan.

Belongs to the protease inhibitor I3 (leguminous Kunitz-type inhibitor) family. In terms of tissue distribution, expressed in roots.

It is found in the endoplasmic reticulum. In terms of biological role, exhibits Kunitz trypsin protease inhibitor activity. Involved in modulating programmed cell death (PCD) in plant-pathogen interactions. Can inhibit both serine proteases and cysteine proteases. May be involved in the modulation of the proteases that participate in the hydrolysis of dietary proteins in the gut of spider mites. This is Kunitz trypsin inhibitor 4 from Arabidopsis thaliana (Mouse-ear cress).